Consider the following 145-residue polypeptide: Zinc finger C2H2 protein ECU06_1150 (145 aa).

The C2H2-type 1; atypical zinc-finger motif lies at 35 to 57 (KDCARYGEAQASKHALLAHARRH). The C2H2-type 2 zinc-finger motif lies at 63 to 85 (FECHLCGKDYTRSDPLKKHLLRH).

In Encephalitozoon cuniculi (strain GB-M1) (Microsporidian parasite), this protein is Zinc finger C2H2 protein ECU06_1150.